The primary structure comprises 148 residues: Snaclec B3/B5 (148 aa).

Positions 1–24 are cleaved as a signal peptide; it reads MGRFIFVSFGLLVVFLSLSGTGAA. 3 disulfide bridges follow: Cys27-Cys38, Cys55-Cys144, and Cys121-Cys136. The 112-residue stretch at 34–145 folds into the C-type lectin domain; it reads YDQHCYKVFD…CRLLGHFVCK (112 aa).

Belongs to the snaclec family. As to quaternary structure, heterodimer; disulfide-linked. As to expression, expressed by the venom gland.

The protein resides in the secreted. Functionally, interferes with one step of hemostasis (modulation of platelet aggregation, or coagulation cascade, for example). The chain is Snaclec B3/B5 from Macrovipera lebetinus (Levantine viper).